Consider the following 255-residue polypeptide: Leucyl/phenylalanyl-tRNA--protein transferase (255 aa).

The protein belongs to the L/F-transferase family.

It localises to the cytoplasm. The catalysed reaction is N-terminal L-lysyl-[protein] + L-leucyl-tRNA(Leu) = N-terminal L-leucyl-L-lysyl-[protein] + tRNA(Leu) + H(+). It carries out the reaction N-terminal L-arginyl-[protein] + L-leucyl-tRNA(Leu) = N-terminal L-leucyl-L-arginyl-[protein] + tRNA(Leu) + H(+). The enzyme catalyses L-phenylalanyl-tRNA(Phe) + an N-terminal L-alpha-aminoacyl-[protein] = an N-terminal L-phenylalanyl-L-alpha-aminoacyl-[protein] + tRNA(Phe). In terms of biological role, functions in the N-end rule pathway of protein degradation where it conjugates Leu, Phe and, less efficiently, Met from aminoacyl-tRNAs to the N-termini of proteins containing an N-terminal arginine or lysine. This Burkholderia pseudomallei (strain 668) protein is Leucyl/phenylalanyl-tRNA--protein transferase.